A 469-amino-acid chain; its full sequence is Aspartyl/glutamyl-tRNA(Asn/Gln) amidotransferase subunit B (469 aa).

Belongs to the GatB/GatE family. GatB subfamily. Heterotrimer of A, B and C subunits.

It carries out the reaction L-glutamyl-tRNA(Gln) + L-glutamine + ATP + H2O = L-glutaminyl-tRNA(Gln) + L-glutamate + ADP + phosphate + H(+). The catalysed reaction is L-aspartyl-tRNA(Asn) + L-glutamine + ATP + H2O = L-asparaginyl-tRNA(Asn) + L-glutamate + ADP + phosphate + 2 H(+). Allows the formation of correctly charged Asn-tRNA(Asn) or Gln-tRNA(Gln) through the transamidation of misacylated Asp-tRNA(Asn) or Glu-tRNA(Gln) in organisms which lack either or both of asparaginyl-tRNA or glutaminyl-tRNA synthetases. The reaction takes place in the presence of glutamine and ATP through an activated phospho-Asp-tRNA(Asn) or phospho-Glu-tRNA(Gln). In Methanococcus maripaludis (strain DSM 14266 / JCM 13030 / NBRC 101832 / S2 / LL), this protein is Aspartyl/glutamyl-tRNA(Asn/Gln) amidotransferase subunit B.